The sequence spans 199 residues: Holliday junction branch migration complex subunit RuvA (199 aa).

The tract at residues 1 to 63 (MIGKLNGKID…EEHIHLYGFL (63 aa)) is domain I. Residues 64 to 141 (TLEEKNFFNL…TKIFSSSAII (78 aa)) are domain II. Residues 141-145 (IKDSN) form a flexible linker region. The segment at 146–199 (ISSIAINEVMKALVNLGFTRFEAQNTVQGIITQNPKISIDELIKTALKNRNSSF) is domain III.

The protein belongs to the RuvA family. As to quaternary structure, homotetramer. Forms an RuvA(8)-RuvB(12)-Holliday junction (HJ) complex. HJ DNA is sandwiched between 2 RuvA tetramers; dsDNA enters through RuvA and exits via RuvB. An RuvB hexamer assembles on each DNA strand where it exits the tetramer. Each RuvB hexamer is contacted by two RuvA subunits (via domain III) on 2 adjacent RuvB subunits; this complex drives branch migration. In the full resolvosome a probable DNA-RuvA(4)-RuvB(12)-RuvC(2) complex forms which resolves the HJ.

The protein resides in the cytoplasm. Its function is as follows. The RuvA-RuvB-RuvC complex processes Holliday junction (HJ) DNA during genetic recombination and DNA repair, while the RuvA-RuvB complex plays an important role in the rescue of blocked DNA replication forks via replication fork reversal (RFR). RuvA specifically binds to HJ cruciform DNA, conferring on it an open structure. The RuvB hexamer acts as an ATP-dependent pump, pulling dsDNA into and through the RuvAB complex. HJ branch migration allows RuvC to scan DNA until it finds its consensus sequence, where it cleaves and resolves the cruciform DNA. The protein is Holliday junction branch migration complex subunit RuvA of Rickettsia prowazekii (strain Madrid E).